Reading from the N-terminus, the 223-residue chain is Interleukin-12 subunit alpha (223 aa).

Residues 1–23 (MCPSARSLLLLASLVLLEHLGSA) form the signal peptide. Asparagine 41, asparagine 79, asparagine 121, and asparagine 176 each carry an N-linked (GlcNAc...) asparagine glycan. Cystine bridges form between cysteine 66-cysteine 200 and cysteine 87-cysteine 125.

Belongs to the IL-6 superfamily. In terms of assembly, heterodimer with IL12B; disulfide-linked. This heterodimer is known as interleukin IL-12. Heterodimer with EBI3/IL27B; not disulfide-linked. This heterodimer is known as interleukin IL-35. Interacts with NBR1; this interaction promotes IL-12 secretion.

It localises to the secreted. Heterodimerizes with IL12B to form the IL-12 cytokine or with EBI3/IL27B to form the IL-35 cytokine. IL-12 is primarily produced by professional antigen-presenting cells (APCs) such as B-cells and dendritic cells (DCs) as well as macrophages and granulocytes and regulates T-cell and natural killer-cell responses, induces the production of interferon-gamma (IFN-gamma), favors the differentiation of T-helper 1 (Th1) cells and is an important link between innate resistance and adaptive immunity. Mechanistically, exerts its biological effects through a receptor composed of IL12R1 and IL12R2 subunits. Binding to the receptor results in the rapid tyrosine phosphorylation of a number of cellular substrates including the JAK family kinases TYK2 and JAK2. In turn, recruited STAT4 gets phosphorylated and translocates to the nucleus where it regulates cytokine/growth factor responsive genes. As part of IL-35, plays essential roles in maintaining the immune homeostasis of the liver microenvironment and also functions as an immune-suppressive cytokine. Mediates biological events through unconventional receptors composed of IL12RB2 and gp130/IL6ST heterodimers or homodimers. Signaling requires the transcription factors STAT1 and STAT4, which form a unique heterodimer that binds to distinct DNA sites. The sequence is that of Interleukin-12 subunit alpha (IL12A) from Marmota monax (Woodchuck).